A 317-amino-acid polypeptide reads, in one-letter code: Spore protein CgeB (317 aa).

May be involved in maturation of the outermost layer of the spore. May act as a glycosyltransferase that contributes to the glycosylation state of the spore. The sequence is that of Spore protein CgeB from Bacillus subtilis (strain 168).